The primary structure comprises 603 residues: Class E vacuolar protein-sorting machinery protein hse1 (603 aa).

The 130-residue stretch at 16–145 (ATDENLTSEN…KLKTQNPNLQ (130 aa)) folds into the VHS domain. 2 disordered regions span residues 140 to 164 (QNPN…QKEE) and 177 to 212 (EKPS…PPGT). Residues 151-163 (GKREITEADRQKE) are compositionally biased toward basic and acidic residues. In terms of domain architecture, UIM spans 162-181 (KEEEELQMALALSIREKPSA). Low complexity predominate over residues 180-210 (SAAPEPKAEPSTSASVPASQTQAATSQAVPP). An SH3 domain is found at 215 to 274 (ATVSRVRALFDFQPSEPGELQFRKGDIIAVLESVYKDWWKGSLRGQTGIFPLNYVEKLPD). Positions 371–603 (HPAQPQYGRP…ANSNPNSYYR (233 aa)) are disordered. Residues 374–397 (QPQYGRPGQTPYGYPGPAAPLGYP) show a composition bias toward low complexity. Residues 461-473 (TYDNPQELGTSVY) are compositionally biased toward polar residues. Residues 487–497 (PYPPSGAPVPP) show a composition bias toward pro residues. The segment covering 498–508 (GVHQQFQHQQQ) has biased composition (low complexity). A compositionally biased stretch (pro residues) spans 540–561 (PPYPTAPVAHQPPPSHQPPPVP). Positions 586 to 603 (YNPSQAGAANSNPNSYYR) are enriched in polar residues.

This sequence belongs to the STAM family. As to quaternary structure, component of the ESCRT-0 complex composed of HSE1 and VPS27.

Its subcellular location is the endosome membrane. In terms of biological role, component of the ESCRT-0 complex which is the sorting receptor for ubiquitinated cargo proteins at the multivesicular body (MVB). The chain is Class E vacuolar protein-sorting machinery protein hse1 (hse1) from Neosartorya fischeri (strain ATCC 1020 / DSM 3700 / CBS 544.65 / FGSC A1164 / JCM 1740 / NRRL 181 / WB 181) (Aspergillus fischerianus).